Here is a 249-residue protein sequence, read N- to C-terminus: uncharacterized protein (249 aa).

An N-terminal signal peptide occupies residues 1-20 (MSNQNKVLSLGLLLLAAVAA).

It belongs to the IIV-6 117L family.

This is an uncharacterized protein from Acheta domesticus (House cricket).